Here is a 123-residue protein sequence, read N- to C-terminus: Aspartate 1-decarboxylase (123 aa).

Residue Ser-25 is the Schiff-base intermediate with substrate; via pyruvic acid of the active site. A Pyruvic acid (Ser) modification is found at Ser-25. Residue Thr-57 participates in substrate binding. Tyr-58 serves as the catalytic Proton donor. Substrate is bound at residue 73–75 (GAA).

This sequence belongs to the PanD family. In terms of assembly, heterooctamer of four alpha and four beta subunits. Requires pyruvate as cofactor. Is synthesized initially as an inactive proenzyme, which is activated by self-cleavage at a specific serine bond to produce a beta-subunit with a hydroxyl group at its C-terminus and an alpha-subunit with a pyruvoyl group at its N-terminus.

Its subcellular location is the cytoplasm. It catalyses the reaction L-aspartate + H(+) = beta-alanine + CO2. It functions in the pathway cofactor biosynthesis; (R)-pantothenate biosynthesis; beta-alanine from L-aspartate: step 1/1. In terms of biological role, catalyzes the pyruvoyl-dependent decarboxylation of aspartate to produce beta-alanine. The sequence is that of Aspartate 1-decarboxylase from Clostridium novyi (strain NT).